The chain runs to 525 residues: GMP synthase [glutamine-hydrolyzing] (525 aa).

One can recognise a Glutamine amidotransferase type-1 domain in the interval 13–202 (TILVLDFGSQ…AVDLCHAKQN (190 aa)). The Nucleophile role is filled by Cys-89. Active-site residues include His-176 and Glu-178. Positions 203–400 (WTMKNFIGTE…LGISHELVWR (198 aa)) constitute a GMPS ATP-PPase domain. 231–237 (SGGVDST) provides a ligand contact to ATP. XMP contacts are provided by Arg-304, Asp-462, Lys-517, and Glu-523.

As to quaternary structure, homodimer. Mg(2+) is required as a cofactor.

The protein localises to the cytoplasm. Its subcellular location is the cytosol. The enzyme catalyses XMP + L-glutamine + ATP + H2O = GMP + L-glutamate + AMP + diphosphate + 2 H(+). It functions in the pathway purine metabolism; GMP biosynthesis; GMP from XMP (L-Gln route): step 1/1. In terms of biological role, catalyzes the conversion of xanthine monophosphate (XMP) to GMP in the presence of glutamine and ATP through an adenyl-XMP intermediate. This chain is GMP synthase [glutamine-hydrolyzing] (GUA1), found in Candida glabrata (strain ATCC 2001 / BCRC 20586 / JCM 3761 / NBRC 0622 / NRRL Y-65 / CBS 138) (Yeast).